Here is a 569-residue protein sequence, read N- to C-terminus: Glutamate--tRNA ligase (569 aa).

A 'HIGH' region motif is present at residues 107-117; it reads PEPNGYPHIGH.

This sequence belongs to the class-I aminoacyl-tRNA synthetase family. Glutamate--tRNA ligase type 2 subfamily.

It is found in the cytoplasm. The enzyme catalyses tRNA(Glu) + L-glutamate + ATP = L-glutamyl-tRNA(Glu) + AMP + diphosphate. Catalyzes the attachment of glutamate to tRNA(Glu) in a two-step reaction: glutamate is first activated by ATP to form Glu-AMP and then transferred to the acceptor end of tRNA(Glu). This Nitrosopumilus maritimus (strain SCM1) protein is Glutamate--tRNA ligase.